Here is a 513-residue protein sequence, read N- to C-terminus: Activin receptor type-2A (513 aa).

Residues 1 to 19 (MGAAAKLAFAVFLISCSSG) form the signal peptide. At 20 to 135 (AILGRSETQE…TSNPVTPKPP (116 aa)) the chain is on the extracellular side. Disulfide bonds link C30/C60, C50/C78, C85/C104, C91/C103, and C105/C110. 2 N-linked (GlcNAc...) asparagine glycosylation sites follow: N43 and N66. Residues 136-161 (YYNILLYSLVPLMLVAGIVICAFWVY) form a helical membrane-spanning segment. The Cytoplasmic segment spans residues 162 to 513 (RHHKMAYPPV…VDFPPKESSL (352 aa)). One can recognise a Protein kinase domain in the interval 192-485 (LQLLEVKARG…GERITQMQRL (294 aa)). ATP-binding positions include 198 to 206 (KARGGFGCV) and K219. The Proton acceptor role is filled by D322.

Belongs to the protein kinase superfamily. TKL Ser/Thr protein kinase family. TGFB receptor subfamily. In terms of assembly, part of a complex consisting of MAGI2/ARIP1, ACVR2A, ACVR1B and SMAD3. Interacts with MAGI2/ARIP1. Interacts with type I receptor ACVR1. Interacts with TSC22D1/TSC-22. Interacts with activin A/INHBA. Mg(2+) is required as a cofactor. Requires Mn(2+) as cofactor.

It localises to the cell membrane. The enzyme catalyses L-threonyl-[receptor-protein] + ATP = O-phospho-L-threonyl-[receptor-protein] + ADP + H(+). The catalysed reaction is L-seryl-[receptor-protein] + ATP = O-phospho-L-seryl-[receptor-protein] + ADP + H(+). Its function is as follows. On ligand binding, forms a receptor complex consisting of two type II and two type I transmembrane serine/threonine kinases. Type II receptors phosphorylate and activate type I receptors which autophosphorylate, then bind and activate SMAD transcriptional regulators. Receptor for activin A, activin B and inhibin A. Mediates induction of adipogenesis by GDF6. This is Activin receptor type-2A (ACVR2A) from Ovis aries (Sheep).